The primary structure comprises 381 residues: Pentraxin-related protein PTX3 (381 aa).

Positions 1-17 are cleaved as a signal peptide; it reads MHLPAILLCALWSAVVA. Disulfide bonds link Cys-179/Cys-357 and Cys-210/Cys-271. The Pentraxin (PTX) domain maps to 179-381; sequence CETAIFFPMR…QAHGGAQYVS (203 aa). Asn-220 carries an N-linked (GlcNAc...) asparagine glycan.

Homooctamer; disulfide-linked. Binds to C1q.

It localises to the secreted. In terms of biological role, plays a role in the regulation of innate resistance to pathogens, inflammatory reactions, possibly clearance of self-components and female fertility. The protein is Pentraxin-related protein PTX3 (Ptx3) of Mus musculus (Mouse).